The sequence spans 98 residues: NADH-ubiquinone oxidoreductase chain 4L (98 aa).

The next 3 membrane-spanning stretches (helical) occupy residues 2-22 (PSIS…MLIF), 29-49 (SLLC…LTIL), and 61-81 (ILLL…LVTV).

It belongs to the complex I subunit 4L family. Core subunit of respiratory chain NADH dehydrogenase (Complex I) which is composed of 45 different subunits.

The protein resides in the mitochondrion inner membrane. It carries out the reaction a ubiquinone + NADH + 5 H(+)(in) = a ubiquinol + NAD(+) + 4 H(+)(out). Its function is as follows. Core subunit of the mitochondrial membrane respiratory chain NADH dehydrogenase (Complex I) which catalyzes electron transfer from NADH through the respiratory chain, using ubiquinone as an electron acceptor. Part of the enzyme membrane arm which is embedded in the lipid bilayer and involved in proton translocation. The polypeptide is NADH-ubiquinone oxidoreductase chain 4L (MT-ND4L) (Eulemur coronatus (Crowned lemur)).